The sequence spans 154 residues: Large ribosomal subunit protein uL23 (154 aa).

This sequence belongs to the universal ribosomal protein uL23 family.

In terms of biological role, this protein binds to a specific region on the 26S rRNA. This chain is Large ribosomal subunit protein uL23 (RPL23A), found in Fritillaria agrestis (Stinkbells).